The chain runs to 298 residues: Beta-soluble NSF attachment protein (298 aa).

It belongs to the SNAP family. As to quaternary structure, interacts with PRKCABP, and disrupts the interaction between GRIA2 and PRKCABP, leading to the internalization of GRIA2. As to expression, brain.

It is found in the membrane. Functionally, required for vesicular transport between the endoplasmic reticulum and the Golgi apparatus. In Bos taurus (Bovine), this protein is Beta-soluble NSF attachment protein (NAPB).